Consider the following 200-residue polypeptide: MRLKLTSHTCLFALSSLLVTPAFAAPSGDNTASDAVERGSEPGIWQRAGNNLSDTWHHWQSQELYVPAMTWHNRWTYDKAKTDRYNERPWGAGYGVSRLDRDGDWHSLYLMAFKDSFNKWEPIGGYGYEKRWRPLENQDVQLGLGFTAGVTMRDNWKYIPIPVLLPMASVSYQRLSFQATYIPGTHNNGNVFFAWLRWQF.

The first 24 residues, 1 to 24 (MRLKLTSHTCLFALSSLLVTPAFA), serve as a signal peptide directing secretion. Residues His72, Asp115, and Ser116 contribute to the active site.

Belongs to the lipid A palmitoyltransferase family. As to quaternary structure, homodimer.

It localises to the cell outer membrane. The enzyme catalyses a lipid A + a 1,2-diacyl-sn-glycero-3-phosphocholine = a hepta-acyl lipid A + a 2-acyl-sn-glycero-3-phosphocholine. It carries out the reaction a lipid IVA + a 1,2-diacyl-sn-glycero-3-phosphocholine = a lipid IVB + a 2-acyl-sn-glycero-3-phosphocholine. The catalysed reaction is a lipid IIA + a 1,2-diacyl-sn-glycero-3-phosphocholine = a lipid IIB + a 2-acyl-sn-glycero-3-phosphocholine. In terms of biological role, transfers a fatty acid residue from the sn-1 position of a phospholipid to the N-linked hydroxyfatty acid chain on the proximal unit of lipid A or its precursors. The sequence is that of Lipid A acyltransferase PagP from Dickeya dadantii (strain 3937) (Erwinia chrysanthemi (strain 3937)).